A 215-amino-acid chain; its full sequence is NAD(P)H-quinone oxidoreductase subunit I (215 aa).

2 4Fe-4S ferredoxin-type domains span residues G55–V84 and R95–E124. The [4Fe-4S] cluster site is built by C64, C67, C70, C74, C104, C107, C110, and C114. The disordered stretch occupies residues A166–A215. Residues M169–R180 show a composition bias toward basic and acidic residues. Positions E203 to A215 are enriched in polar residues.

This sequence belongs to the complex I 23 kDa subunit family. As to quaternary structure, NDH-1 is composed of at least 11 different subunits. Requires [4Fe-4S] cluster as cofactor.

It is found in the cellular thylakoid membrane. It catalyses the reaction a plastoquinone + NADH + (n+1) H(+)(in) = a plastoquinol + NAD(+) + n H(+)(out). It carries out the reaction a plastoquinone + NADPH + (n+1) H(+)(in) = a plastoquinol + NADP(+) + n H(+)(out). In terms of biological role, NDH-1 shuttles electrons from an unknown electron donor, via FMN and iron-sulfur (Fe-S) centers, to quinones in the respiratory and/or the photosynthetic chain. The immediate electron acceptor for the enzyme in this species is believed to be plastoquinone. Couples the redox reaction to proton translocation, and thus conserves the redox energy in a proton gradient. This Parasynechococcus marenigrum (strain WH8102) protein is NAD(P)H-quinone oxidoreductase subunit I.